A 149-amino-acid polypeptide reads, in one-letter code: Transcription antitermination protein NusB (149 aa).

The protein belongs to the NusB family.

Its function is as follows. Involved in transcription antitermination. Required for transcription of ribosomal RNA (rRNA) genes. Binds specifically to the boxA antiterminator sequence of the ribosomal RNA (rrn) operons. The polypeptide is Transcription antitermination protein NusB (Chromobacterium violaceum (strain ATCC 12472 / DSM 30191 / JCM 1249 / CCUG 213 / NBRC 12614 / NCIMB 9131 / NCTC 9757 / MK)).